The following is a 1604-amino-acid chain: MSLQNSHSKKYVLTFFMSTCLLTSSFLSTSARAASFTQLANQIPTLSGLSEVQRKQKWNSYTLQEKQEAWRRAKLTPDFVQAMIDMQTGFTESDLSSRNNKTRHKAREKKSELDLYIAGTKQGFKEKVDGYISQGKIPTPEEAAQNLEIDYDAKKTDNKLEKNQNVRRVEKDKKALLDLYIHSITTSVKEKEYITTGQVPELGELEKALNISKEEAKHRRTIIRDQVMANERPKLVRSGTVLTKKELHKRFGKDTTTDDTKYIDDITTEVMYTKKQGYVNTDFLPKISEIMNEFKVDKGRANLYLNQIKAGIEAKLLADNNQTTTKPFTKHSRTTTNTAGISSGVPFDTGRTKPETKSFDFKRSMYSLLNRKQEDQLSKTEQHLKQQIKLEENKEEFKEILTKNPIDALLFAEQSNLGNSFKQEAISNIDLSKDISRILFTVDDKGNRTILNTILTTTPEHKDELIKQAQHHAIQTLPTSISDKDVSDKKKLTLATLAATEDKKVLEEALDNWLSTNGYKRKPEVESLISILLSDETTLKAGIDKIFELPVENNVNNNSNKGQNGTPILPPTPPLNGSMPPSPPPPLLNGTPTSTAFNNSNPNHKFDLKNFEATYPRLYKSYNEFIQNTTSASQSQATTTSNNIPDTKAKMGESLELLKQKVAKQNEVIGLIHNEVTKLYNFSPKTFVNLFNTENEEIIKKIEQIAKREDIQKILQDNDIKITSTFVSKIFNESLEQTKQRLRSSNIINAKQYKRIEQYANKQECVTEFLRITNPLEQLKFANKYINILGQSTFNGKLNELIENPNKLTFSQKINFVLQGYQELTREIPTAKANLNKLKQNILEKIEIQQLIANKDISRKDLLDILNNKNPELLKSLLEAKVILEENKLNNSANEVDLKEIIPSLNYLTSEQLTSLINRITIEGVKTALKAKWQQENKTVSNNTEKPLIYNNGTPMPPPIPNGNSNFGTNDYLISMGYTQEFIDRMDKVKPNNNFGKNHNYTATDFKSNVGKNYYESTSKLGGTDILLTDSQKLENAIKKEVLAKYIEEPNRDMQDDSLLKQAFEEKFYYAEDKNTKVIPKPSEVNFDPNFIGPRTEVGQEIYELYEQELLKLARDPVFIEYVKNNNNTQKDERELLISFIEQIESKRPELEQKYGSDVQSEDNNQEKKVGHLNMKQFQSLFQQENESANDESSTKDDPQPEDSNKKSEKSDSETALSPRLLSSNDSKNDKSSDDKKSLLVLRSSEEESKKDIALESEDEAIDMSFKTEAIAEQDEATQRQQVSDDTNRKVAILVKATSTLHKPVHYNILSDRLKVAAIGAGDEEASINRGVWISGLYGINKQGTWKNIPKYQGRTTGVTIGADAEFINSHDVIGIAYSRLEFQIKYNKKLEKTAVNGHLLSIYGLKELIKGFSLQAITSYGHNYIKNKSKSINNIIGKYQNNNLSFQTLLNYKYRTKYDLHFIPNIGFKYDYSRASNYKEYNVDIENLMNQKKSNQSFESSIGGKIVFKPIATVNNIILTPSLYGNIERHFNNKNTKVNAKATFKGQTLQETIIIPKQPKLGYNIGSNILMSKKNINVLLEYNYYTHRKYQSHQGLIKLKVNL.

The first 33 residues, 1–33 (MSLQNSHSKKYVLTFFMSTCLLTSSFLSTSARA), serve as a signal peptide directing secretion. 3 disordered regions span residues 324–354 (TTKP…RTKP), 554–603 (NVNN…SNPN), and 1183–1240 (QQEN…KSLL). Residues 554–564 (NVNNNSNKGQN) show a composition bias toward low complexity. The segment covering 568 to 587 (ILPPTPPLNGSMPPSPPPPL) has biased composition (pro residues). 2 stretches are compositionally biased toward basic and acidic residues: residues 1193–1213 (SSTK…KSDS) and 1227–1240 (SKND…KSLL). The Autotransporter domain occupies 1325 to 1604 (EASINRGVWI…QGLIKLKVNL (280 aa)).

It is found in the cell outer membrane. This Rickettsia felis (strain ATCC VR-1525 / URRWXCal2) (Rickettsia azadi) protein is Putative surface cell antigen sca2 (sca2).